The chain runs to 117 residues: Ig heavy chain V region 108A (117 aa).

An N-terminal signal peptide occupies residues 1–19 (MGWSWIFLFLLSGTAGVHS). In terms of domain architecture, Ig-like spans 20–117 (EVQLQQSGPE…EDSAVYYCAR (98 aa)).

This is Ig heavy chain V region 108A (Igh-VJ558) from Mus musculus (Mouse).